The following is a 338-amino-acid chain: Heat-inducible transcription repressor HrcA (338 aa).

Belongs to the HrcA family.

Its function is as follows. Negative regulator of class I heat shock genes (grpE-dnaK-dnaJ and groELS operons). Prevents heat-shock induction of these operons. This chain is Heat-inducible transcription repressor HrcA, found in Nitrosomonas europaea (strain ATCC 19718 / CIP 103999 / KCTC 2705 / NBRC 14298).